The chain runs to 393 residues: NAD(P)H-quinone oxidoreductase subunit H, chloroplastic (393 aa).

This sequence belongs to the complex I 49 kDa subunit family. As to quaternary structure, NDH is composed of at least 16 different subunits, 5 of which are encoded in the nucleus.

It localises to the plastid. The protein resides in the chloroplast thylakoid membrane. It carries out the reaction a plastoquinone + NADH + (n+1) H(+)(in) = a plastoquinol + NAD(+) + n H(+)(out). It catalyses the reaction a plastoquinone + NADPH + (n+1) H(+)(in) = a plastoquinol + NADP(+) + n H(+)(out). In terms of biological role, NDH shuttles electrons from NAD(P)H:plastoquinone, via FMN and iron-sulfur (Fe-S) centers, to quinones in the photosynthetic chain and possibly in a chloroplast respiratory chain. The immediate electron acceptor for the enzyme in this species is believed to be plastoquinone. Couples the redox reaction to proton translocation, and thus conserves the redox energy in a proton gradient. This chain is NAD(P)H-quinone oxidoreductase subunit H, chloroplastic, found in Nicotiana tomentosiformis (Tobacco).